The following is a 108-amino-acid chain: Ig kappa chain V-V region HP 93G7 (108 aa).

Residues 1 to 23 (DIQMTQTTSSLSASLGDRVTISC) form a framework-1 region. Cysteine 23 and cysteine 88 are disulfide-bonded. The segment at 24-34 (RASQDISNYLN) is complementarity-determining-1. Positions 35–49 (WYQQKPDGTVKLLIY) are framework-2. Residues 50-56 (YTSRLHS) are complementarity-determining-2. A framework-3 region spans residues 57–88 (GVPSRFSGSGSGTDYSLTISNLEQEDIATYFC). The interval 89 to 97 (QQGNMLPRT) is complementarity-determining-3. The framework-4 stretch occupies residues 98–108 (FGGGTKLEIKR).

The chain is Ig kappa chain V-V region HP 93G7 from Mus musculus (Mouse).